We begin with the raw amino-acid sequence, 78 residues long: D-alanyl carrier protein (78 aa).

Positions 1–78 constitute a Carrier domain; it reads MEFREQVLDL…KIVEVLEELR (78 aa). S36 carries the post-translational modification O-(pantetheine 4'-phosphoryl)serine.

This sequence belongs to the DltC family. In terms of processing, 4'-phosphopantetheine is transferred from CoA to a specific serine of apo-DCP.

Its subcellular location is the cytoplasm. It functions in the pathway cell wall biogenesis; lipoteichoic acid biosynthesis. Carrier protein involved in the D-alanylation of lipoteichoic acid (LTA). The loading of thioester-linked D-alanine onto DltC is catalyzed by D-alanine--D-alanyl carrier protein ligase DltA. The DltC-carried D-alanyl group is further transferred to cell membrane phosphatidylglycerol (PG) by forming an ester bond, probably catalyzed by DltD. D-alanylation of LTA plays an important role in modulating the properties of the cell wall in Gram-positive bacteria, influencing the net charge of the cell wall. This chain is D-alanyl carrier protein, found in Staphylococcus xylosus.